We begin with the raw amino-acid sequence, 102 residues long: Large ribosomal subunit protein bL21 (102 aa).

The protein belongs to the bacterial ribosomal protein bL21 family. Part of the 50S ribosomal subunit. Contacts protein L20.

In terms of biological role, this protein binds to 23S rRNA in the presence of protein L20. This chain is Large ribosomal subunit protein bL21, found in Lachnospira eligens (strain ATCC 27750 / DSM 3376 / VPI C15-48 / C15-B4) (Eubacterium eligens).